The sequence spans 339 residues: Transmembrane protein 120B (339 aa).

The stretch at 1–77 (MSGQLERCER…ASREEAELVQ (77 aa)) forms a coiled coil. 6 helical membrane-spanning segments follow: residues 102 to 124 (GLYLNLVLGNVNVTLLSNQAKFA), 132 to 152 (FKLYLTIILLLGAVACRFFLH), 159 to 179 (VFNFLLVWYYCTLTIRESILI), 187 to 207 (GWWVSHHYVSTFLSGVMLTWP), 270 to 290 (FLLPFLFCGHFWQLYNAVTLF), and 302 to 322 (QVFVLALTFLVLFLGNFLTTL).

Belongs to the TMEM120 family. Heterooligomer with TMEM120A.

The protein resides in the nucleus inner membrane. Its function is as follows. Necessary for efficient adipogenesis. Does not show ion channel activity. This Bos taurus (Bovine) protein is Transmembrane protein 120B (TMEM120B).